The chain runs to 235 residues: Ribosomal RNA small subunit methyltransferase G (235 aa).

S-adenosyl-L-methionine is bound by residues Gly98, Met103, 149-150 (VE), and Arg164.

This sequence belongs to the methyltransferase superfamily. RNA methyltransferase RsmG family.

Its subcellular location is the cytoplasm. It carries out the reaction guanosine(527) in 16S rRNA + S-adenosyl-L-methionine = N(7)-methylguanosine(527) in 16S rRNA + S-adenosyl-L-homocysteine. Functionally, specifically methylates the N7 position of guanine in position 527 of 16S rRNA. This chain is Ribosomal RNA small subunit methyltransferase G, found in Cupriavidus pinatubonensis (strain JMP 134 / LMG 1197) (Cupriavidus necator (strain JMP 134)).